A 338-amino-acid polypeptide reads, in one-letter code: Tripartite motif-containing protein 44 (338 aa).

Disordered regions lie at residues 1–25 (MASG…EPDE) and 72–162 (ARGD…EFDP). Positions 95 to 162 (EAGEGIESEE…ETEAESEFDP (68 aa)) are enriched in acidic residues. Residues 109-153 (EEESETEEESEDESEEDSEEEMEDEQESEAEEDNQEEGESEAEGE) adopt a coiled-coil conformation. The segment at 171-212 (VAKRKCPDHGLDLSTYCQEDKQLICVLCPVIGAHHGHHLSTL) adopts a B box-type zinc-finger fold. C176, H179, C198, and H204 together coordinate Zn(2+). Residues 257–322 (QQEFKKVQKV…QLDTSNESAE (66 aa)) are a coiled coil. The tract at residues 307-338 (MAQAKEQLDTSNESAEPKAEGDEEEPGGTDED) is disordered. The segment covering 327-338 (GDEEEPGGTDED) has biased composition (acidic residues).

Interacts (via coiled coil) with TRIM17 (via coiled coil).

May play a role in the process of differentiation and maturation of neuronal cells. May regulate the activity of TRIM17. Is a negative regulator of PAX6 expression. This Bos taurus (Bovine) protein is Tripartite motif-containing protein 44 (TRIM44).